Reading from the N-terminus, the 275-residue chain is MTLVSDLALPKPKVHIVIPARFKSTRLPGKPLLEIHGKPMILWVAQKASQATFADDLCIATDDERIAAVCQQAGYEVVMTDAHHASGTDRLSEVAQKKGWDAEDIVVNMQGDEPLVPPQLLEQVKDLLVNKPDCVMATLYELILDYQEFIRPSVVKVVTDNLKHALYFSRAPIPCDRDHAMAMVQQPEGSHQPPLTVPKQAYRHLGIYAYRVKLLQDFVRWSPGILENLESLEQLRVLENGGKIAIEAASVQLPPGVDLQEDLDRLNALPISELQ.

It belongs to the KdsB family.

It is found in the cytoplasm. It carries out the reaction 3-deoxy-alpha-D-manno-oct-2-ulosonate + CTP = CMP-3-deoxy-beta-D-manno-octulosonate + diphosphate. Its pathway is nucleotide-sugar biosynthesis; CMP-3-deoxy-D-manno-octulosonate biosynthesis; CMP-3-deoxy-D-manno-octulosonate from 3-deoxy-D-manno-octulosonate and CTP: step 1/1. It functions in the pathway bacterial outer membrane biogenesis; lipopolysaccharide biosynthesis. In terms of biological role, activates KDO (a required 8-carbon sugar) for incorporation into bacterial lipopolysaccharide in Gram-negative bacteria. This Psychrobacter sp. (strain PRwf-1) protein is 3-deoxy-manno-octulosonate cytidylyltransferase.